The following is a 639-amino-acid chain: Bone morphogenetic protein 1 homolog (639 aa).

A signal peptide spans 1–23 (MDLLYYMTVSLLGFILSLTTFIG). The propeptide occupies 24–109 (ETTRALSDDV…RAVTARPERR (86 aa)). The Peptidase M12A domain occupies 100–305 (RAVTARPERR…IQANLLYKCP (206 aa)). Asparagine 122 and asparagine 140 each carry an N-linked (GlcNAc...) asparagine glycan. Cystine bridges form between cysteine 143-cysteine 304, cysteine 167-cysteine 189, cysteine 169-cysteine 170, cysteine 307-cysteine 333, cysteine 360-cysteine 382, and cysteine 420-cysteine 446. Histidine 197 serves as a coordination point for Zn(2+). Glutamate 198 is a catalytic residue. Residues histidine 201 and histidine 207 each coordinate Zn(2+). 2 CUB domains span residues 307–419 (CGRT…YEAI) and 420–531 (CGGH…DFFK). Residue asparagine 317 is glycosylated (N-linked (GlcNAc...) asparagine). Asparagine 455 is a glycosylation site (N-linked (GlcNAc...) asparagine). Disulfide bonds link cysteine 473/cysteine 495, cysteine 536/cysteine 548, cysteine 544/cysteine 557, and cysteine 559/cysteine 572. One can recognise an EGF-like; calcium-binding domain in the interval 532–573 (EKDECAQPDQGGCMDVCVNTIGSYRCDCRPGYELSSDGRRCE).

Zn(2+) is required as a cofactor. In terms of tissue distribution, ectodermal and primary mesenchyme cells in hatched blastula.

The protein is Bone morphogenetic protein 1 homolog of Strongylocentrotus purpuratus (Purple sea urchin).